We begin with the raw amino-acid sequence, 512 residues long: Glutamyl-tRNA(Gln) amidotransferase subunit A (512 aa).

Residues Lys82 and Ser157 each act as charge relay system in the active site. Ser181 acts as the Acyl-ester intermediate in catalysis.

It belongs to the amidase family. GatA subfamily. As to quaternary structure, heterotrimer of A, B and C subunits.

The enzyme catalyses L-glutamyl-tRNA(Gln) + L-glutamine + ATP + H2O = L-glutaminyl-tRNA(Gln) + L-glutamate + ADP + phosphate + H(+). Its function is as follows. Allows the formation of correctly charged Gln-tRNA(Gln) through the transamidation of misacylated Glu-tRNA(Gln) in organisms which lack glutaminyl-tRNA synthetase. The reaction takes place in the presence of glutamine and ATP through an activated gamma-phospho-Glu-tRNA(Gln). The sequence is that of Glutamyl-tRNA(Gln) amidotransferase subunit A from Bordetella petrii (strain ATCC BAA-461 / DSM 12804 / CCUG 43448).